A 426-amino-acid chain; its full sequence is Enolase (426 aa).

Q165 is a binding site for (2R)-2-phosphoglycerate. The Proton donor role is filled by E209. Residues D244, E287, and D313 each contribute to the Mg(2+) site. 4 residues coordinate (2R)-2-phosphoglycerate: K338, R367, S368, and K389. Residue K338 is the Proton acceptor of the active site.

This sequence belongs to the enolase family. It depends on Mg(2+) as a cofactor.

The protein localises to the cytoplasm. It localises to the secreted. It is found in the cell surface. The enzyme catalyses (2R)-2-phosphoglycerate = phosphoenolpyruvate + H2O. It functions in the pathway carbohydrate degradation; glycolysis; pyruvate from D-glyceraldehyde 3-phosphate: step 4/5. Catalyzes the reversible conversion of 2-phosphoglycerate (2-PG) into phosphoenolpyruvate (PEP). It is essential for the degradation of carbohydrates via glycolysis. The sequence is that of Enolase from Methanococcus maripaludis (strain C7 / ATCC BAA-1331).